Reading from the N-terminus, the 247-residue chain is MAQEKMELDLEPDTSYGGTLRRSSSAPLIHGLSDLSQVFQPYTLRTRRNSTTIMSRHSLEEGLDMVNRETAHEREMQTAMQISQSWDESLSLSDSDFDKPEKLYSPKRIDFTPVSPAPSPTRGFGKMFVSSSGLPPSPVPSPRRFSRRSQSPVKCIRPSVLGPLKRKGEMETESQPKRLFQGTTNMLSPDAAQLSDLSSCSDILDGSSSSSGLSSDPLAKGSATAESPVACSNSCSSFILMDDLSPK.

Positions 1 to 23 (MAQEKMELDLEPDTSYGGTLRRS) are disordered. The residue at position 2 (Ala2) is an N-acetylalanine. Ser25, Ser33, Ser50, Ser58, and Leu63 each carry phosphoserine. Residues 82 to 104 (ISQSWDESLSLSDSDFDKPEKLY) are disordered. The span at 83–94 (SQSWDESLSLSD) shows a compositional bias: low complexity. At Thr112 the chain carries Phosphothreonine. Phosphoserine occurs at positions 115 and 119. The residue at position 122 (Arg122) is an Omega-N-methylarginine. Disordered stretches follow at residues 129-152 (VSSS…SQSP), 158-177 (PSVL…SQPK), and 202-230 (DILD…SPVA). A phosphoserine mark is found at Ser137 and Ser141. The segment covering 166 to 176 (RKGEMETESQP) has biased composition (basic and acidic residues). Residues 202-216 (DILDGSSSSSGLSSD) are compositionally biased toward low complexity.

The protein belongs to the FAM122 family. Isoform 3 and isoform 4 are phosphorylated on Ser-62 and Ser-64.

The polypeptide is PABIR family member 2 (Homo sapiens (Human)).